We begin with the raw amino-acid sequence, 602 residues long: Probable translation initiation factor IF-2 (602 aa).

The tr-type G domain occupies 10–227 (LRQPIVVVLG…LLAGLTQNYM (218 aa)). The interval 19–26 (GHVDHGKT) is G1. 19 to 26 (GHVDHGKT) contacts GTP. The segment at 44-48 (EMTQE) is G2. Residues 83-86 (DTPG) are G3. Residues 83-87 (DTPGH) and 137-140 (NKID) contribute to the GTP site. The interval 137-140 (NKID) is G4. A G5 region spans residues 205-207 (SAK).

Belongs to the TRAFAC class translation factor GTPase superfamily. Classic translation factor GTPase family. IF-2 subfamily.

Function in general translation initiation by promoting the binding of the formylmethionine-tRNA to ribosomes. Seems to function along with eIF-2. The polypeptide is Probable translation initiation factor IF-2 (Sulfurisphaera tokodaii (strain DSM 16993 / JCM 10545 / NBRC 100140 / 7) (Sulfolobus tokodaii)).